A 986-amino-acid chain; its full sequence is MAGVPVGALLPLLVGVCGAVTGSRVYPANEVTLLDSRSVQGELGWIASPLEGGWEEVSIMDEKNTPIRTYQVCNVMEPSQNNWLRTDWIPREGAQRVYIEIKFTLRDCNSLPGVMGTCKETFNLYYYESNNDKERFIRESQFAKIDTIAADESFTQVDIGDRIMKLNTEVRDVGPLSKKGFYLAFQDVGACIALVSVRVFYKKCPLTVRNLAQFPDTITGADTSSLVEVRGSCVNNSEEKDVPKMYCGADGEWLVPIGNCLCNAGYEERNGECQACKIGYYKALSTDVACAKCPPHSYSIWEGSTSCTCDRGFFRAENDAASMPCTRPPSAPQNLISNVNETSVNLEWSAPQNKGGRDDISYNVVCKRCGAGEPSHCRSCGSGVHFSPQQNGLKTTKVSITDLLAHTNYTFEVWAVNGVSKHNPSQDQAVSVTVTTNQAAPSPIALIQAKEITRHSVALAWLEPDRPNGVILEYEVKYYEKDQNERSYRIVKTASRNTDIKGLNPLTSYVFHVRARTAAGYGDFSGPFEFTTNTVPSPIIGDGTNPTVLLVSVAGSVVLVVILIAAFVISRRRSKYSKAKQEADEEKHLNQGVRTYVDPFTYEDPNQAVREFAKEIDASCIKIEKVIGVGEFGEVCSGRLKVPGKREICVAIKTLKAGYTDKQRRDFLSEASIMGQFDHPNIIHLEGVVTKCKPVMIITEYMENGSLDAFLRKNDGRFTVIQLVGMLRGIGSGMKYLSDMSYVHRDLAARNILVNSNLVCKVSDFGMSRVLEDDPEAAYTTRGGKIPIRWTAPEAIAYRKFTSASDVWSYGIVMWEVMSYGERPYWDMSNQDVIKAIEEGYRLPPPMDCPIALHQLMLDCWQKERSDRPKFGQIVNMLDKLIRNPNSLKRTGSESSRPSTALLDPSSPEFSAVVSVSDWLQAIKMERYKDNFTAAGYTTLEAVVHMNQDDLARIGITAITHQNKILSSVQAMRSQMQQMHGRMVPV.

The first 19 residues, 1–19 (MAGVPVGALLPLLVGVCGA), serve as a signal peptide directing secretion. Residues 20–547 (VTGSRVYPAN…PIIGDGTNPT (528 aa)) lie on the Extracellular side of the membrane. Positions 30 to 209 (EVTLLDSRSV…FYKKCPLTVR (180 aa)) constitute an Eph LBD domain. Residues Asn-235, Asn-340, and Asn-408 are each glycosylated (N-linked (GlcNAc...) asparagine). Fibronectin type-III domains are found at residues 328-439 (PPSA…TNQA) and 440-537 (APSP…TVPS). The helical transmembrane segment at 548-569 (VLLVSVAGSVVLVVILIAAFVI) threads the bilayer. Topologically, residues 570 to 986 (SRRRSKYSKA…QQMHGRMVPV (417 aa)) are cytoplasmic. Phosphotyrosine; by autocatalysis occurs at positions 596 and 602. Residues 621-882 (IKIEKVIGVG…QIVNMLDKLI (262 aa)) form the Protein kinase domain. ATP-binding positions include 627–635 (IGVGEFGEV) and Lys-653. Asp-746 (proton acceptor) is an active-site residue. 2 positions are modified to phosphotyrosine; by autocatalysis: Tyr-779 and Tyr-928. Positions 911-975 (SAVVSVSDWL…LSSVQAMRSQ (65 aa)) constitute an SAM domain. The PDZ-binding motif lies at 984 to 986 (VPV).

Belongs to the protein kinase superfamily. Tyr protein kinase family. Ephrin receptor subfamily. As to quaternary structure, interacts with the src family kinase, p59-Fyn, through the major phosphorylation site at position Tyr-602. Interacts (via PDZ motif) with SIPA1L1 (via PDZ domain); controls neuronal morphology through regulation of the RAP1 (RAP1A or RAP1B) and RAP2 (RAP2A, RAP2B or RAP2C) GTPases. Expressed at high levels in brain, with expression also detected in the kidney, lung, muscle and thymus.

It is found in the cell membrane. The protein resides in the early endosome. It carries out the reaction L-tyrosyl-[protein] + ATP = O-phospho-L-tyrosyl-[protein] + ADP + H(+). Functionally, receptor tyrosine kinase which binds membrane-bound ephrin family ligands residing on adjacent cells, leading to contact-dependent bidirectional signaling into neighboring cells. The signaling pathway downstream of the receptor is referred to as forward signaling while the signaling pathway downstream of the ephrin ligand is referred to as reverse signaling. Highly promiscuous, it has the unique property among Eph receptors to bind and to be physiologically activated by both GPI-anchored ephrin-A and transmembrane ephrin-B ligands including EFNA1 and EFNB3. Upon activation by ephrin ligands, modulates cell morphology and integrin-dependent cell adhesion through regulation of the Rac, Rap and Rho GTPases activity. Plays an important role in the development of the nervous system controlling different steps of axonal guidance including the establishment of the corticospinal projections. The chain is Ephrin type-A receptor 4 (EPHA4) from Gallus gallus (Chicken).